The following is a 640-amino-acid chain: ATP-dependent DNA helicase YoaA (640 aa).

A Helicase ATP-binding domain is found at 16–278 (ELSQNIKGFR…KDMQQLGTTS (263 aa)). Residue 51–58 (AGTGTGKT) participates in ATP binding. Cys114 is a binding site for [4Fe-4S] cluster. The short motif at 125–128 (GVLG) is the DEAH box element. Positions 174, 179, and 185 each coordinate [4Fe-4S] cluster. Positions 231–234 (DEAH) match the DEAH box motif. The Helicase C-terminal domain occupies 458-634 (SLGEILLPVI…SRTRDLNKVI (177 aa)).

The protein belongs to the helicase family. DinG subfamily. [4Fe-4S] cluster serves as cofactor.

It carries out the reaction Couples ATP hydrolysis with the unwinding of duplex DNA at the replication fork by translocating in the 5'-3' direction. This creates two antiparallel DNA single strands (ssDNA). The leading ssDNA polymer is the template for DNA polymerase III holoenzyme which synthesizes a continuous strand.. It catalyses the reaction ATP + H2O = ADP + phosphate + H(+). Functionally, probably a 5'-3' DNA helicase. This Haemophilus influenzae (strain ATCC 51907 / DSM 11121 / KW20 / Rd) protein is ATP-dependent DNA helicase YoaA.